Consider the following 437-residue polypeptide: Putative permease IIC component (437 aa).

Positions 2–437 (FDYILSLGGT…LFLRKRELSE (436 aa)) constitute a PTS EIIC type-2 domain. 12 consecutive transmembrane segments (helical) span residues 5–25 (ILSL…GLIF), 35–55 (AGVT…MAID), 88–108 (ATAI…AMLV), 134–154 (LMTG…ALSL), 173–193 (ISIP…LDAI), 215–235 (GMVG…GLAA), 236–256 (GEGF…MVLF), 302–322 (TIAV…ILPG), 325–345 (VLPL…TVIH), 354–374 (ISGV…APYF), 385–405 (FAGE…GWSI), and 410–430 (SLGI…VLFL).

The protein resides in the cell inner membrane. The phosphoenolpyruvate-dependent sugar phosphotransferase system (PTS), a major carbohydrate active -transport system, catalyzes the phosphorylation of incoming sugar substrates concomitant with their translocation across the cell membrane. The sequence is that of Putative permease IIC component (sgcC) from Escherichia coli (strain K12).